Consider the following 779-residue polypeptide: Chloride channel protein CLC-c (779 aa).

S27 is subject to Phosphoserine. 12 consecutive transmembrane segments (helical) span residues 92–112, 142–162, 190–210, 215–235, 257–277, 287–307, 341–361, 380–400, 466–486, 488–508, 520–540, and 541–561; these read TFLK…VGFL, FAFA…CAFI, STLF…FVVG, MVHT…KKYR, GAAA…LFAL, ALLW…RSLI, LAIV…NYLV, IMLV…LPWL, LAIF…IAIP, GLFI…GRLL, SLLG…SLCV, and ILLE…VLLI. The CBS 1 domain occupies 601 to 659; sequence DVVSGALISFSRVEKVGVIWQALKMTRHNGFPVIDEPPFTEASELCGIALRSHLLVLLQ. S672 carries the post-translational modification Phosphoserine. A CBS 2 domain is found at 713–777; it reads ITNTSPYTVL…VLGLYPHIDP (65 aa). Residues 741–761 traverse the membrane as a helical segment; sequence HLCVVPKTPGRPPIVGILTRH.

It belongs to the chloride channel (TC 2.A.49) family. As to quaternary structure, homodimer. Interacts with PP2A5. As to expression, broadly expressed in the plant.

The protein localises to the membrane. In terms of biological role, voltage-gated chloride channel. The protein is Chloride channel protein CLC-c (CLC-C) of Arabidopsis thaliana (Mouse-ear cress).